A 317-amino-acid chain; its full sequence is MDAYELVTRNTAEIVTEDELRALLNKPTKRVYTGYEPSGEIHLGHLVTINKLMDMKAAGFDVVVLIANLHAYLNRKGTFEQIKELADYNKACIEAVGLKGAEFVLGTDVQLTPKYQTEVLTLCQQITLNRATRSMDEVGRAMDNPMVSQMVYPVMQVVDIPTLNVDAAVGGIDQRKIHMLAREHLPTLGYKPPVCIHTPIVNGLDGEKMSSSKGNVVSVADSPEEIKKKMKKAFCPPETEGNPILQIFRYNVFPRMDTIAIRRPEKFGGDLEFHSYAELEAAYAGGKIHPMDLKAACGDALTELLADAYAYVQSYKN.

Tyr-32 lines the L-tyrosine pocket. A 'HIGH' region motif is present at residues 37-45 (PSGEIHLGH). L-tyrosine is bound by residues Tyr-152, Gln-156, Asp-159, and Gln-174. The 'KMSKS' region signature appears at 208-212 (KMSSS). Ser-211 provides a ligand contact to ATP.

Belongs to the class-I aminoacyl-tRNA synthetase family. TyrS type 3 subfamily. In terms of assembly, homodimer.

It localises to the cytoplasm. The catalysed reaction is tRNA(Tyr) + L-tyrosine + ATP = L-tyrosyl-tRNA(Tyr) + AMP + diphosphate + H(+). In terms of biological role, catalyzes the attachment of tyrosine to tRNA(Tyr) in a two-step reaction: tyrosine is first activated by ATP to form Tyr-AMP and then transferred to the acceptor end of tRNA(Tyr). This Methanocorpusculum labreanum (strain ATCC 43576 / DSM 4855 / Z) protein is Tyrosine--tRNA ligase.